We begin with the raw amino-acid sequence, 210 residues long: Uracil phosphoribosyltransferase (210 aa).

Residues arginine 78, arginine 103, and 130-138 each bind 5-phospho-alpha-D-ribose 1-diphosphate; that span reads DPMLATGGS. Uracil contacts are provided by residues isoleucine 195 and 200–202; that span reads GDA. Aspartate 201 serves as a coordination point for 5-phospho-alpha-D-ribose 1-diphosphate.

This sequence belongs to the UPRTase family. Mg(2+) is required as a cofactor.

The enzyme catalyses UMP + diphosphate = 5-phospho-alpha-D-ribose 1-diphosphate + uracil. It participates in pyrimidine metabolism; UMP biosynthesis via salvage pathway; UMP from uracil: step 1/1. Its activity is regulated as follows. Allosterically activated by GTP. Catalyzes the conversion of uracil and 5-phospho-alpha-D-ribose 1-diphosphate (PRPP) to UMP and diphosphate. This Leifsonia xyli subsp. xyli (strain CTCB07) protein is Uracil phosphoribosyltransferase.